A 367-amino-acid chain; its full sequence is 5-amino-6-(D-ribitylamino)uracil--L-tyrosine 4-hydroxyphenyl transferase (367 aa).

Positions 56 to 290 (VTYVRNQNIN…MFAVARLFLD (235 aa)) constitute a Radical SAM core domain. Residues Cys70, Cys74, and Cys77 each contribute to the [4Fe-4S] cluster site.

Belongs to the radical SAM superfamily. CofH family. In terms of assembly, consists of two subunits, CofG and CofH. Requires [4Fe-4S] cluster as cofactor.

The catalysed reaction is 5-amino-6-(D-ribitylamino)uracil + L-tyrosine + S-adenosyl-L-methionine = 5-amino-5-(4-hydroxybenzyl)-6-(D-ribitylimino)-5,6-dihydrouracil + 2-iminoacetate + 5'-deoxyadenosine + L-methionine + H(+). It functions in the pathway cofactor biosynthesis; coenzyme F0 biosynthesis. In terms of biological role, catalyzes the radical-mediated synthesis of 5-amino-5-(4-hydroxybenzyl)-6-(D-ribitylimino)-5,6-dihydrouracil from 5-amino-6-(D-ribitylamino)uracil and L-tyrosine. The polypeptide is 5-amino-6-(D-ribitylamino)uracil--L-tyrosine 4-hydroxyphenyl transferase (Methanoculleus marisnigri (strain ATCC 35101 / DSM 1498 / JR1)).